Consider the following 424-residue polypeptide: DNA primase DnaG (424 aa).

The region spanning 166–241 (DTIIIVEGRA…KVDFIARAPE (76 aa)) is the Toprim domain. Mg(2+)-binding residues include E172, D215, and D217.

Belongs to the archaeal DnaG primase family. As to quaternary structure, forms a ternary complex with MCM helicase and DNA. Component of the archaeal exosome complex. Mg(2+) is required as a cofactor.

It carries out the reaction ssDNA + n NTP = ssDNA/pppN(pN)n-1 hybrid + (n-1) diphosphate.. RNA polymerase that catalyzes the synthesis of short RNA molecules used as primers for DNA polymerase during DNA replication. Also part of the exosome, which is a complex involved in RNA degradation. Acts as a poly(A)-binding protein that enhances the interaction between heteromeric, adenine-rich transcripts and the exosome. The chain is DNA primase DnaG from Staphylothermus marinus (strain ATCC 43588 / DSM 3639 / JCM 9404 / F1).